The primary structure comprises 479 residues: Muscarinic acetylcholine receptor M4 (479 aa).

Residues 1 to 31 lie on the Extracellular side of the membrane; the sequence is MANFTPVNGSSGNQSVRLVTSSSHNRYETVE. Asn-8 and Asn-13 each carry an N-linked (GlcNAc...) asparagine glycan. A helical membrane pass occupies residues 32-54; the sequence is MVFIATVTGSLSLVTVVGNILVM. Topologically, residues 55 to 68 are cytoplasmic; sequence LSIKVNRQLQTVNN. Residues 69-89 form a helical membrane-spanning segment; the sequence is YFLFSLACADLIIGAFSMNLY. Residues 90–106 lie on the Extracellular side of the membrane; that stretch reads TVYIIKGYWPLGAVVCD. The cysteines at positions 105 and 185 are disulfide-linked. A helical transmembrane segment spans residues 107-128; sequence LWLALDYVVSNASVMNLLIISF. Topologically, residues 129 to 148 are cytoplasmic; that stretch reads DRYFCVTKPLTYPARRTTKM. A helical membrane pass occupies residues 149–171; the sequence is AGLMIAAAWVLSFVLWAPAILFW. Topologically, residues 172–193 are extracellular; the sequence is QFVVGKRTVPDNQCFIQFLSNP. Residues 194–216 form a helical membrane-spanning segment; the sequence is AVTFGTAIAAFYLPVVIMTVLYI. At 217–401 the chain is on the cytoplasmic side; sequence HISLASRSRV…AARERKVTRT (185 aa). The tract at residues 271–333 is disordered; the sequence is KLEEAPPPAL…PAPPLQPRAL (63 aa). Over residues 275–286 the composition is skewed to pro residues; it reads APPPALPPPPRP. Over residues 294-304 the composition is skewed to polar residues; sequence NESSSGSATQN. The chain crosses the membrane as a helical span at residues 402–422; sequence IFAILLAFILTWTPYNVMVLV. Residues 423–436 are Extracellular-facing; sequence NTFCQSCIPDTVWS. Residues 437–456 traverse the membrane as a helical segment; it reads IGYWLCYVNSTINPACYALC. Residues 457–479 lie on the Cytoplasmic side of the membrane; the sequence is NATFKKTFRHLLLCQYRNIGTAR. Phosphothreonine is present on residues Thr-459, Thr-463, and Thr-477.

This sequence belongs to the G-protein coupled receptor 1 family. Muscarinic acetylcholine receptor subfamily. CHRM4 sub-subfamily.

It is found in the cell membrane. It localises to the postsynaptic cell membrane. In terms of biological role, the muscarinic acetylcholine receptor mediates various cellular responses, including inhibition of adenylate cyclase, breakdown of phosphoinositides and modulation of potassium channels through the action of G proteins. Primary transducing effect is inhibition of adenylate cyclase. The protein is Muscarinic acetylcholine receptor M4 (CHRM4) of Homo sapiens (Human).